A 428-amino-acid polypeptide reads, in one-letter code: Elongation factor 1-alpha (428 aa).

A tr-type G domain is found at 5–215 (KPHVNIVFIG…ALDQIPEPPK (211 aa)). Positions 14-21 (GHVDHGKS) are G1. 14–21 (GHVDHGKS) contributes to the GTP binding site. Residue Ser-21 participates in Mg(2+) binding. A G2 region spans residues 68–72 (GITID). The tract at residues 89 to 92 (DAPG) is G3. Residues 89–93 (DAPGH) and 144–147 (NKMD) each bind GTP. Residues 144–147 (NKMD) form a G4 region. A G5 region spans residues 181–183 (SAW).

It belongs to the TRAFAC class translation factor GTPase superfamily. Classic translation factor GTPase family. EF-Tu/EF-1A subfamily.

The protein resides in the cytoplasm. The catalysed reaction is GTP + H2O = GDP + phosphate + H(+). Functionally, GTP hydrolase that promotes the GTP-dependent binding of aminoacyl-tRNA to the A-site of ribosomes during protein biosynthesis. This is Elongation factor 1-alpha from Thermococcus onnurineus (strain NA1).